Consider the following 354-residue polypeptide: UDP-3-O-acylglucosamine N-acyltransferase (354 aa).

Catalysis depends on His250, which acts as the Proton acceptor.

The protein belongs to the transferase hexapeptide repeat family. LpxD subfamily. As to quaternary structure, homotrimer.

The enzyme catalyses a UDP-3-O-[(3R)-3-hydroxyacyl]-alpha-D-glucosamine + a (3R)-hydroxyacyl-[ACP] = a UDP-2-N,3-O-bis[(3R)-3-hydroxyacyl]-alpha-D-glucosamine + holo-[ACP] + H(+). It functions in the pathway bacterial outer membrane biogenesis; LPS lipid A biosynthesis. Functionally, catalyzes the N-acylation of UDP-3-O-acylglucosamine using 3-hydroxyacyl-ACP as the acyl donor. Is involved in the biosynthesis of lipid A, a phosphorylated glycolipid that anchors the lipopolysaccharide to the outer membrane of the cell. This chain is UDP-3-O-acylglucosamine N-acyltransferase, found in Methylococcus capsulatus (strain ATCC 33009 / NCIMB 11132 / Bath).